We begin with the raw amino-acid sequence, 198 residues long: Na(+)-translocating NADH-quinone reductase subunit E (198 aa).

6 helical membrane-spanning segments follow: residues 11 to 31, 39 to 59, 77 to 97, 110 to 130, 140 to 160, and 176 to 196; these read SIFI…FLAV, FGLG…NNLV, FLNF…LEMV, GIFL…SFMV, IVYG…LAGI, and LGIT…FSGV.

The protein belongs to the NqrDE/RnfAE family. As to quaternary structure, composed of six subunits; NqrA, NqrB, NqrC, NqrD, NqrE and NqrF.

The protein localises to the cell inner membrane. The catalysed reaction is a ubiquinone + n Na(+)(in) + NADH + H(+) = a ubiquinol + n Na(+)(out) + NAD(+). Functionally, NQR complex catalyzes the reduction of ubiquinone-1 to ubiquinol by two successive reactions, coupled with the transport of Na(+) ions from the cytoplasm to the periplasm. NqrA to NqrE are probably involved in the second step, the conversion of ubisemiquinone to ubiquinol. The sequence is that of Na(+)-translocating NADH-quinone reductase subunit E from Vibrio campbellii (strain ATCC BAA-1116).